The sequence spans 688 residues: UvrABC system protein B (688 aa).

The 389-residue stretch at 41 to 429 folds into the Helicase ATP-binding domain; it reads ANFEAGLAKQ…AGEVTELVVR (389 aa). 54–61 serves as a coordination point for ATP; sequence GVTGSGKT. The Beta-hairpin motif lies at 107–130; sequence YYDYYQPEAYVPSSDTFIEKDSSI. In terms of domain architecture, Helicase C-terminal spans 446-612; sequence QVDDLMSEIH…SVERPISDIM (167 aa). Positions 616–646 are disordered; it reads REDAAEKKSGKGRSKSRQVAEETPDYRAMKP. Positions 633–645 are enriched in basic and acidic residues; it reads QVAEETPDYRAMK. A UVR domain is found at 650 to 685; the sequence is AGKLKSLEQKMYQHAKDLEFEAAAQIRDQIQKLKTA.

This sequence belongs to the UvrB family. As to quaternary structure, forms a heterotetramer with UvrA during the search for lesions. Interacts with UvrC in an incision complex.

It is found in the cytoplasm. In terms of biological role, the UvrABC repair system catalyzes the recognition and processing of DNA lesions. A damage recognition complex composed of 2 UvrA and 2 UvrB subunits scans DNA for abnormalities. Upon binding of the UvrA(2)B(2) complex to a putative damaged site, the DNA wraps around one UvrB monomer. DNA wrap is dependent on ATP binding by UvrB and probably causes local melting of the DNA helix, facilitating insertion of UvrB beta-hairpin between the DNA strands. Then UvrB probes one DNA strand for the presence of a lesion. If a lesion is found the UvrA subunits dissociate and the UvrB-DNA preincision complex is formed. This complex is subsequently bound by UvrC and the second UvrB is released. If no lesion is found, the DNA wraps around the other UvrB subunit that will check the other stand for damage. The chain is UvrABC system protein B from Xanthomonas oryzae pv. oryzae (strain KACC10331 / KXO85).